Here is a 90-residue protein sequence, read N- to C-terminus: RNA-binding protein Hfq (90 aa).

Residues 9 to 68 enclose the Sm domain; that stretch reads DPFLNALRRERVPVSIYLVNGIKLQGQVESFDQFVILLKNTVSQMVYKHAISTVVPARPF.

It belongs to the Hfq family. Homohexamer.

Its function is as follows. RNA chaperone that binds small regulatory RNA (sRNAs) and mRNAs to facilitate mRNA translational regulation in response to envelope stress, environmental stress and changes in metabolite concentrations. Also binds with high specificity to tRNAs. The protein is RNA-binding protein Hfq of Shewanella oneidensis (strain ATCC 700550 / JCM 31522 / CIP 106686 / LMG 19005 / NCIMB 14063 / MR-1).